Reading from the N-terminus, the 230-residue chain is Large ribosomal subunit protein uL1 (230 aa).

Belongs to the universal ribosomal protein uL1 family. In terms of assembly, part of the 50S ribosomal subunit.

Functionally, binds directly to 23S rRNA. The L1 stalk is quite mobile in the ribosome, and is involved in E site tRNA release. Protein L1 is also a translational repressor protein, it controls the translation of the L11 operon by binding to its mRNA. The polypeptide is Large ribosomal subunit protein uL1 (Onion yellows phytoplasma (strain OY-M)).